The sequence spans 230 residues: Small ribosomal subunit protein uS7m (230 aa).

The protein belongs to the universal ribosomal protein uS7 family. In terms of assembly, part of the small ribosomal subunit.

The protein localises to the mitochondrion. Functionally, one of the primary rRNA binding proteins, it binds directly to 18S rRNA where it nucleates assembly of the head domain of the small subunit. In Marchantia polymorpha (Common liverwort), this protein is Small ribosomal subunit protein uS7m (RPS7).